The primary structure comprises 286 residues: 4-diphosphocytidyl-2-C-methyl-D-erythritol kinase (286 aa).

Lys11 is an active-site residue. An ATP-binding site is contributed by 94–104; sequence PMGGGIGGGSS. The active site involves Asp136.

Belongs to the GHMP kinase family. IspE subfamily.

The catalysed reaction is 4-CDP-2-C-methyl-D-erythritol + ATP = 4-CDP-2-C-methyl-D-erythritol 2-phosphate + ADP + H(+). It functions in the pathway isoprenoid biosynthesis; isopentenyl diphosphate biosynthesis via DXP pathway; isopentenyl diphosphate from 1-deoxy-D-xylulose 5-phosphate: step 3/6. Functionally, catalyzes the phosphorylation of the position 2 hydroxy group of 4-diphosphocytidyl-2C-methyl-D-erythritol. This chain is 4-diphosphocytidyl-2-C-methyl-D-erythritol kinase, found in Pseudomonas entomophila (strain L48).